Consider the following 696-residue polypeptide: Methionine--tRNA ligase (696 aa).

Positions 12 to 22 (PYANGAIHLGH) match the 'HIGH' region motif. Zn(2+)-binding residues include C143, C146, C156, and C159. The 'KMSKS' region signature appears at 336–340 (KMSKS). K339 contacts ATP. Positions 556 to 580 (SLAPAPEAQSQQRHAEHQQNEVTAE) are disordered. The tRNA-binding domain occupies 591 to 696 (DFMKVDLRIV…SGAQPGMRVK (106 aa)).

This sequence belongs to the class-I aminoacyl-tRNA synthetase family. MetG type 1 subfamily. Homodimer. Zn(2+) is required as a cofactor.

It is found in the cytoplasm. It catalyses the reaction tRNA(Met) + L-methionine + ATP = L-methionyl-tRNA(Met) + AMP + diphosphate. Is required not only for elongation of protein synthesis but also for the initiation of all mRNA translation through initiator tRNA(fMet) aminoacylation. This chain is Methionine--tRNA ligase, found in Dechloromonas aromatica (strain RCB).